Consider the following 206-residue polypeptide: mRNA-decapping protein D9 (206 aa).

The 184-residue stretch at 23–206 folds into the Nudix hydrolase domain; it reads KKTHVFAICV…FIYNTLLYSK (184 aa). The Nudix box motif lies at 104–125; that stretch reads GKLNKSETIDDCIRREIKEETD. Position 110 (Glu-110) interacts with Mg(2+). Glu-119 functions as the Nucleophile in the catalytic mechanism. Mg(2+) contacts are provided by Glu-123 and Asp-144.

Belongs to the Nudix hydrolase family. Mg(2+) serves as cofactor. The cofactor is Mn(2+).

Decapping enzyme required for the removal of the 5'-end m7GpppN cap tethered to viral and host mRNAs to allow their decay in cells. May therefore accelerate viral and cellular mRNA turnover to eliminate competing host mRNAs and allow stage-specific synthesis of viral proteins. Acceleration of the turnover of cellular transcripts may even promote the shutoff of host protein synthesis. Does not cleave unmethylated RNAs or RNAs shorter than 24 nucleotides. This chain is mRNA-decapping protein D9, found in Oryctolagus cuniculus (Rabbit).